Here is a 224-residue protein sequence, read N- to C-terminus: ATP phosphoribosyltransferase (224 aa).

Belongs to the ATP phosphoribosyltransferase family. Short subfamily. Heteromultimer composed of HisG and HisZ subunits.

The protein resides in the cytoplasm. The enzyme catalyses 1-(5-phospho-beta-D-ribosyl)-ATP + diphosphate = 5-phospho-alpha-D-ribose 1-diphosphate + ATP. It functions in the pathway amino-acid biosynthesis; L-histidine biosynthesis; L-histidine from 5-phospho-alpha-D-ribose 1-diphosphate: step 1/9. In terms of biological role, catalyzes the condensation of ATP and 5-phosphoribose 1-diphosphate to form N'-(5'-phosphoribosyl)-ATP (PR-ATP). Has a crucial role in the pathway because the rate of histidine biosynthesis seems to be controlled primarily by regulation of HisG enzymatic activity. This chain is ATP phosphoribosyltransferase, found in Cupriavidus necator (strain ATCC 17699 / DSM 428 / KCTC 22496 / NCIMB 10442 / H16 / Stanier 337) (Ralstonia eutropha).